A 201-amino-acid chain; its full sequence is Transgelin (201 aa).

A2 is subject to N-acetylalanine. A Calponin-homology (CH) domain is found at 24–137 (EELEERLVEW…RTLMALGSLA (114 aa)). S166 is modified (phosphoserine). Residue K172 is modified to N6-acetyllysine. A Calponin-like repeat occupies 175–200 (IGLQMGSNRGASQAGMTGYGRPRQII). A Phosphoserine modification is found at S181. Omega-N-methylarginine is present on R183.

The protein belongs to the calponin family.

It localises to the cytoplasm. Its function is as follows. Actin cross-linking/gelling protein. Involved in calcium interactions and contractile properties of the cell that may contribute to replicative senescence. This chain is Transgelin (TAGLN), found in Homo sapiens (Human).